The chain runs to 183 residues: Large ribosomal subunit protein uL10 (183 aa).

Belongs to the universal ribosomal protein uL10 family. Part of the ribosomal stalk of the 50S ribosomal subunit. The N-terminus interacts with L11 and the large rRNA to form the base of the stalk. The C-terminus forms an elongated spine to which L12 dimers bind in a sequential fashion forming a multimeric L10(L12)X complex.

Functionally, forms part of the ribosomal stalk, playing a central role in the interaction of the ribosome with GTP-bound translation factors. The chain is Large ribosomal subunit protein uL10 from Mesomycoplasma hyopneumoniae (strain 7448) (Mycoplasma hyopneumoniae).